We begin with the raw amino-acid sequence, 347 residues long: Putative ORC1-type DNA replication protein 1 (347 aa).

ATP-binding positions include 34 to 38 (TGKTV), Tyr-167, and Arg-179.

Belongs to the CDC6/cdc18 family.

Functionally, involved in regulation of DNA replication. Has no effect on MCM helicase activity, either stimulatory or inhibitory. Does not bind DNA. This Thermoplasma acidophilum (strain ATCC 25905 / DSM 1728 / JCM 9062 / NBRC 15155 / AMRC-C165) protein is Putative ORC1-type DNA replication protein 1 (cdc6-1).